Reading from the N-terminus, the 991-residue chain is Envelope glycoprotein gp160 (991 aa).

A signal peptide spans 1 to 106; sequence MTSKESKPSR…CLMWEMRKGN (106 aa). Residues 107–840 are Extracellular-facing; that stretch reads QCQAEEVIAL…WSSWFSWLKY (734 aa). N-linked (GlcNAc...) asparagine; by host glycosylation is found at asparagine 140, asparagine 161, asparagine 206, asparagine 258, asparagine 298, asparagine 364, asparagine 381, asparagine 387, asparagine 403, asparagine 435, asparagine 439, asparagine 470, asparagine 475, asparagine 481, asparagine 491, asparagine 501, asparagine 515, asparagine 527, asparagine 537, asparagine 542, asparagine 543, and asparagine 568. The interval 665 to 685 is fusion peptide; the sequence is GIGLVIVLAIMAIIAAAGAGL. Residues 697–747 are a coiled coil; the sequence is RTAVQSLANATAAQQEVLEASYAMVQHIAKGIRILEARVARVEALVDRMMV. N-linked (GlcNAc...) asparagine; by host glycosylation is present at asparagine 705. Residues 731–747 are immunosuppression; it reads LEARVARVEALVDRMMV. 4 N-linked (GlcNAc...) asparagine; by host glycosylation sites follow: asparagine 773, asparagine 780, asparagine 796, and asparagine 830. Residues 788–823 are a coiled coil; the sequence is EEIEQHEGNLSLLLREAALQVHIAQRDARRIPDAWK. A helical transmembrane segment spans residues 841 to 861; it reads VPWIIMGIVGLICFRILMCVI. Residues 862-991 are Cytoplasmic-facing; it reads SMCLQAYKQV…PTLENDYVEL (130 aa). Cysteine 864 carries S-palmitoyl cysteine; by host lipidation.

As to quaternary structure, the mature envelope protein (Env) consists of a trimer of SU-TM heterodimers attached by noncovalent interactions or by a labile interchain disulfide bond. Post-translationally, specific enzymatic cleavages in vivo yield mature proteins. Envelope glycoproteins are synthesized as an inactive precursor that is N-glycosylated and processed likely by host cell furin or by a furin-like protease in the Golgi to yield the mature SU and TM proteins. The cleavage site between SU and TM requires the minimal sequence [KR]-X-[KR]-R. In terms of processing, the transmembrane protein is palmitoylated.

Its subcellular location is the virion membrane. The protein localises to the host cell membrane. The surface protein (SU) attaches the virus to the host cell by binding to its receptor. This interaction triggers the refolding of the transmembrane protein (TM) and is thought to activate its fusogenic potential by unmasking its fusion peptide. Fusion occurs at the host cell plasma membrane. Its function is as follows. The transmembrane protein (TM) acts as a class I viral fusion protein. Under the current model, the protein has at least 3 conformational states: pre-fusion native state, pre-hairpin intermediate state, and post-fusion hairpin state. During viral and target cell membrane fusion, the coiled coil regions (heptad repeats) assume a trimer-of-hairpins structure, positioning the fusion peptide in close proximity to the C-terminal region of the ectodomain. The formation of this structure appears to drive apposition and subsequent fusion of viral and target cell membranes. Membranes fusion leads to delivery of the nucleocapsid into the cytoplasm. The protein is Envelope glycoprotein gp160 (env) of Ovis aries (Sheep).